Consider the following 1922-residue polypeptide: Kinesin-related protein 4 (1922 aa).

Residues 22-343 form the Kinesin motor domain; sequence KIKVAIRVRP…LQFAKRAKRV (322 aa). 101-108 lines the ATP pocket; that stretch reads GQTSSGKT. The tract at residues 448 to 538 is disordered; the sequence is QKIKKIKNSE…DDEFKDNLNL (91 aa). Residues 456–468 show a composition bias toward low complexity; it reads SENNISSSSSNSS. 2 stretches are compositionally biased toward acidic residues: residues 469 to 480 and 488 to 532; these read GEEDDDDKDDEN and DKDD…DDEF. Residues 562–1712 adopt a coiled-coil conformation; the sequence is QVKVKREDLD…ELESTKQKNL (1151 aa). The disordered stretch occupies residues 1887-1922; the sequence is TSTDNLTTTSTSLKSKSSSNGENKENQNNNIIIKNN.

The protein belongs to the TRAFAC class myosin-kinesin ATPase superfamily. Kinesin family.

The protein resides in the cytoplasm. The protein localises to the cytoskeleton. In terms of biological role, microtubule-associated force-producing protein that plays a role in organelle transport. Its motor activity is directed toward the microtubule's plus end. Cooperates with dynein in organizing spindle assembly during cell division. This chain is Kinesin-related protein 4 (kif4), found in Dictyostelium discoideum (Social amoeba).